The chain runs to 354 residues: DNA polymerase IV (354 aa).

The region spanning 6-187 (IIHVDCDCFY…LPVARLHGVG (182 aa)) is the UmuC domain. Mg(2+)-binding residues include Asp-10 and Asp-105. Glu-106 is a catalytic residue.

This sequence belongs to the DNA polymerase type-Y family. In terms of assembly, monomer. It depends on Mg(2+) as a cofactor.

The protein resides in the cytoplasm. It catalyses the reaction DNA(n) + a 2'-deoxyribonucleoside 5'-triphosphate = DNA(n+1) + diphosphate. In terms of biological role, poorly processive, error-prone DNA polymerase involved in untargeted mutagenesis. Copies undamaged DNA at stalled replication forks, which arise in vivo from mismatched or misaligned primer ends. These misaligned primers can be extended by PolIV. Exhibits no 3'-5' exonuclease (proofreading) activity. May be involved in translesional synthesis, in conjunction with the beta clamp from PolIII. This is DNA polymerase IV from Pseudomonas putida (strain ATCC 700007 / DSM 6899 / JCM 31910 / BCRC 17059 / LMG 24140 / F1).